Consider the following 626-residue polypeptide: tRNA uridine 5-carboxymethylaminomethyl modification enzyme MnmG (626 aa).

13–18 contributes to the FAD binding site; it reads GGGHAG. Position 273-287 (273-287) interacts with NAD(+); sequence GPRYCPSIEDKIHRF.

Belongs to the MnmG family. Homodimer. Heterotetramer of two MnmE and two MnmG subunits. FAD serves as cofactor.

The protein localises to the cytoplasm. NAD-binding protein involved in the addition of a carboxymethylaminomethyl (cmnm) group at the wobble position (U34) of certain tRNAs, forming tRNA-cmnm(5)s(2)U34. In Acinetobacter baumannii (strain AB307-0294), this protein is tRNA uridine 5-carboxymethylaminomethyl modification enzyme MnmG.